The sequence spans 956 residues: Netrin receptor UNC5D (956 aa).

The signal sequence occupies residues 1-30 (MGTGAADGSRGARRWLPWLGLFFWAAGAAA). Residues 31–382 (ARGADGSEIL…SRRGIENASD (352 aa)) lie on the Extracellular side of the membrane. One can recognise an Ig-like domain in the interval 52-149 (PHFIEEPEDA…LGTSKSRKAS (98 aa)). 9 disulfides stabilise this stretch: Cys-73–Cys-134, Cys-85–Cys-132, Cys-178–Cys-229, Cys-262–Cys-299, Cys-266–Cys-303, Cys-277–Cys-289, Cys-318–Cys-352, Cys-322–Cys-357, and Cys-330–Cys-342. Positions 89–91 (WVH) are important for interaction with FLRT2. N-linked (GlcNAc...) asparagine glycosylation is found at Asn-115 and Asn-226. The region spanning 151 to 242 (RIAYLRKNFE…NIVAKRRSLS (92 aa)) is the Ig-like C2-type domain. 2 TSP type-1 domains span residues 250-304 (NGGW…ALCP) and 306-358 (DGSW…GLCI). N-linked (GlcNAc...) asparagine glycans are attached at residues Asn-351 and Asn-379. Residues 383-403 (IALYSGLGAAVVAVAVLVIGV) traverse the membrane as a helical segment. The Cytoplasmic segment spans residues 404–956 (TLYRRSHSDY…DFNYSRQNGL (553 aa)). Residues 545-685 (LRTTGVFGHL…FGTYALTGEP (141 aa)) enclose the ZU5 domain. A Death domain is found at 862-939 (QRICATFDTP…RTHTKLSNIT (78 aa)).

It belongs to the unc-5 family. As to quaternary structure, interacts (via extracellular domain) with FLRT2 and FLRT3 (via extracellular domain); the interaction is direct. Has higher affinity for FLRT2. Identified in a complex with FLRT3 and ADGRL3; does not interact with ADGRL3 by itself. Proteolytically cleaved by caspases during apoptosis. The cleavage does not take place when the receptor is associated with netrin ligand. Its cleavage by caspases is required to induce apoptosis. As to expression, detected in multipolar cells in the brain subventricular zone (at protein level). Detected in embryonic brain neocortex, especially in the subventricular zone. Detected in multipolar cells in the brain subventricular zone. Detected in brain neocortex from young pups, especially in the somatosensory cortex. Expressed in developing limb and mammary gland.

It is found in the cell membrane. Receptor for the netrin NTN4 that promotes neuronal cell survival. Plays a role in cell-cell adhesion and cell guidance. Receptor for netrin involved in cell migration. Plays a role in the regulation of neuronal cell migration in the developing brain via its interaction with FLRT2. Plays a role in axon guidance by mediating axon repulsion of neuronal growth cones in the developing nervous system upon ligand binding. May play a role in apoptosis in response to DNA damage. It also acts as a dependence receptor required for apoptosis induction when not associated with netrin ligand. Mediates cell-cell adhesion via its interaction with FLRT3 on an adjacent cell. The polypeptide is Netrin receptor UNC5D (Unc5d) (Mus musculus (Mouse)).